Consider the following 121-residue polypeptide: Large ribosomal subunit protein eL31 (121 aa).

This sequence belongs to the eukaryotic ribosomal protein eL31 family.

The protein is Large ribosomal subunit protein eL31 (RPL31) of Perilla frutescens (Beefsteak mint).